Reading from the N-terminus, the 156-residue chain is Small ribosomal subunit protein uS7 (156 aa).

Belongs to the universal ribosomal protein uS7 family. Part of the 30S ribosomal subunit. Contacts proteins S9 and S11.

Functionally, one of the primary rRNA binding proteins, it binds directly to 16S rRNA where it nucleates assembly of the head domain of the 30S subunit. Is located at the subunit interface close to the decoding center, probably blocks exit of the E-site tRNA. The protein is Small ribosomal subunit protein uS7 of Rhodospirillum rubrum (strain ATCC 11170 / ATH 1.1.1 / DSM 467 / LMG 4362 / NCIMB 8255 / S1).